A 103-amino-acid chain; its full sequence is N(4)-acetylcytidine amidohydrolase (103 aa).

An ASCH domain is found at 6 to 101; the sequence is ITFFQRFQDD…QIQFYVIEFK (96 aa). The Proton acceptor role is filled by lysine 21. Threonine 24 functions as the Nucleophile in the catalytic mechanism. Catalysis depends on glutamate 74, which acts as the Proton donor.

Belongs to the N(4)-acetylcytidine amidohydrolase family.

The catalysed reaction is N(4)-acetylcytidine + H2O = cytidine + acetate + H(+). The enzyme catalyses N(4)-acetyl-2'-deoxycytidine + H2O = 2'-deoxycytidine + acetate + H(+). It catalyses the reaction N(4)-acetylcytosine + H2O = cytosine + acetate + H(+). In terms of biological role, catalyzes the hydrolysis of N(4)-acetylcytidine (ac4C). The protein is N(4)-acetylcytidine amidohydrolase (yqfB) of Escherichia coli (strain SMS-3-5 / SECEC).